Here is a 152-residue protein sequence, read N- to C-terminus: Aspartate carbamoyltransferase regulatory chain (152 aa).

The Zn(2+) site is built by Cys-108, Cys-113, Cys-136, and Cys-139.

It belongs to the PyrI family. In terms of assembly, contains catalytic and regulatory chains. Zn(2+) serves as cofactor.

Functionally, involved in allosteric regulation of aspartate carbamoyltransferase. The chain is Aspartate carbamoyltransferase regulatory chain from Thermococcus kodakarensis (strain ATCC BAA-918 / JCM 12380 / KOD1) (Pyrococcus kodakaraensis (strain KOD1)).